An 80-amino-acid polypeptide reads, in one-letter code: Phosphoribosylformylglycinamidine synthase subunit PurS (80 aa).

Belongs to the PurS family. As to quaternary structure, homodimer. Part of the FGAM synthase complex composed of 1 PurL, 1 PurQ and 2 PurS subunits.

Its subcellular location is the cytoplasm. The catalysed reaction is N(2)-formyl-N(1)-(5-phospho-beta-D-ribosyl)glycinamide + L-glutamine + ATP + H2O = 2-formamido-N(1)-(5-O-phospho-beta-D-ribosyl)acetamidine + L-glutamate + ADP + phosphate + H(+). Its pathway is purine metabolism; IMP biosynthesis via de novo pathway; 5-amino-1-(5-phospho-D-ribosyl)imidazole from N(2)-formyl-N(1)-(5-phospho-D-ribosyl)glycinamide: step 1/2. Part of the phosphoribosylformylglycinamidine synthase complex involved in the purines biosynthetic pathway. Catalyzes the ATP-dependent conversion of formylglycinamide ribonucleotide (FGAR) and glutamine to yield formylglycinamidine ribonucleotide (FGAM) and glutamate. The FGAM synthase complex is composed of three subunits. PurQ produces an ammonia molecule by converting glutamine to glutamate. PurL transfers the ammonia molecule to FGAR to form FGAM in an ATP-dependent manner. PurS interacts with PurQ and PurL and is thought to assist in the transfer of the ammonia molecule from PurQ to PurL. In Archaeoglobus fulgidus (strain ATCC 49558 / DSM 4304 / JCM 9628 / NBRC 100126 / VC-16), this protein is Phosphoribosylformylglycinamidine synthase subunit PurS.